The chain runs to 80 residues: Putative membrane protein insertion efficiency factor (80 aa).

This sequence belongs to the UPF0161 family.

It is found in the cell inner membrane. In terms of biological role, could be involved in insertion of integral membrane proteins into the membrane. This chain is Putative membrane protein insertion efficiency factor, found in Kosmotoga olearia (strain ATCC BAA-1733 / DSM 21960 / TBF 19.5.1).